Reading from the N-terminus, the 208-residue chain is UPF0637 protein BCAH820_3975 (208 aa).

Belongs to the UPF0637 family.

This chain is UPF0637 protein BCAH820_3975, found in Bacillus cereus (strain AH820).